A 411-amino-acid chain; its full sequence is F-box/kelch-repeat protein At3g61590 (411 aa).

An F-box domain is found at 37–83 (FSMDSLLPDDLLERILSFLPIASIFRAGTVCKRWNEIVSSRRFLCNF). Kelch repeat units lie at residues 81–135 (CNFS…SSCG), 137–178 (VCFM…MSTS), 196–246 (SIVK…ICNN), 251–299 (MIYS…LMNL), 302–350 (RLVI…EFDE), and 352–401 (FASS…FTGF).

In terms of assembly, part of a SCF (ASK-cullin-F-box) protein ligase complex. Interacts with SKP1A/ASK1, SKP1B/ASK2, ASK3, ASK9, ASK11, ASK12, ASK13, ASK14, ASK16 and ASK18.

It participates in protein modification; protein ubiquitination. Component of SCF(ASK-cullin-F-box) E3 ubiquitin ligase complexes, which may mediate the ubiquitination and subsequent proteasomal degradation of target proteins. The polypeptide is F-box/kelch-repeat protein At3g61590 (Arabidopsis thaliana (Mouse-ear cress)).